The following is a 752-amino-acid chain: MAP/microtubule affinity-regulating kinase 4 (752 aa).

Residues 1–36 form a disordered region; that stretch reads MSSRTALAPGNDRNSDTHGTLGSGRSSDKGPSWSSR. In terms of domain architecture, Protein kinase spans 59 to 310; the sequence is YRLLRTIGKG…LEQIMKDKWI (252 aa). Residues 65–73 and K88 contribute to the ATP site; that span reads IGKGNFAKV. The Proton acceptor role is filled by D181. The residue at position 214 (T214) is a Phosphothreonine; by LKB1. In terms of domain architecture, UBA spans 324–368; that stretch reads EPEEDFGDTKRIEVMVGMGYTREEIKEALTNQKYNEVTATYLLLG. The tract at residues 385-615 is disordered; the sequence is ARVRAPSDTT…SGRPRPTTNL (231 aa). Low complexity predominate over residues 391 to 406; that stretch reads SDTTNGTSSSKGSSHN. 2 positions are modified to phosphoserine: S423 and S543. A compositionally biased stretch (low complexity) spans 544-553; it reads PSSHSLAPPS. Residues 703-752 form the KA1 domain; it reads AGGPEPLSHFEVEVCQLPRPGLRGVLFRRVAGTALAFRTLVTRISNDLEL.

Belongs to the protein kinase superfamily. CAMK Ser/Thr protein kinase family. SNF1 subfamily. Interacts with MAPT/TAU. Interacts with gamma-tubulin. Interacts with ODF2. Interacts with USP9X. Interacts with YWHAQ. Interacts with NLRP3; promoting NLRP3 recruitment to microtubule organizing center (MTOC). Mg(2+) serves as cofactor. Ubiquitinated with 'Lys-29'- and 'Lys-33'-linked polyubiquitins which appear to impede LKB1-mediated phosphorylation. Deubiquitinated by USP9X. Post-translationally, phosphorylated at Thr-214 by STK11/LKB1 in complex with STE20-related adapter-alpha (STRADA) pseudo kinase and CAB39. Phosphorylated throughout the cell cycle. Isoform 1 and isoform 2 show similar expression patterns in the central nervous system and are present in the same subsets of neurons including pyramidal and non-pyramidal neurons in the cerebral cortex and hippocampus, cerebellar Purkinje cells, and interneurons and motor neurons in the spinal cord but not in glial cells (at protein level). Isoform 2 is the major isoform in brain and cerebellum. Also expressed in spleen, liver, small intestine, colon, kidney, tongue, testis and lung. Isoform 1 and isoform 2 are expressed at similar levels in heart.

The protein resides in the cytoplasm. It is found in the cytoskeleton. Its subcellular location is the microtubule organizing center. It localises to the centrosome. The protein localises to the cilium axoneme. The protein resides in the cilium basal body. It is found in the cell projection. Its subcellular location is the dendrite. The enzyme catalyses L-seryl-[protein] + ATP = O-phospho-L-seryl-[protein] + ADP + H(+). It carries out the reaction L-threonyl-[protein] + ATP = O-phospho-L-threonyl-[protein] + ADP + H(+). Activated by phosphorylation on Thr-214. Its function is as follows. Serine/threonine-protein kinase. Phosphorylates the microtubule-associated protein MAPT/TAU. Also phosphorylates the microtubule-associated proteins MAP2 and MAP4. Involved in regulation of the microtubule network, causing reorganization of microtubules into bundles. Required for the initiation of axoneme extension during cilium assembly. Regulates the centrosomal location of ODF2 and phosphorylates ODF2 in vitro. Plays a role in cell cycle progression, specifically in the G1/S checkpoint. Reduces neuronal cell survival. Plays a role in energy homeostasis by regulating satiety and metabolic rate. Promotes adipogenesis by activating JNK1 and inhibiting the p38MAPK pathway, and triggers apoptosis by activating the JNK1 pathway. Phosphorylates mTORC1 complex member RPTOR and acts as a negative regulator of the mTORC1 complex, probably due to disruption of the interaction between phosphorylated RPTOR and the RRAGA/RRAGC heterodimer which is required for mTORC1 activation. Involved in NLRP3 positioning along microtubules by mediating NLRP3 recruitment to microtubule organizing center (MTOC) upon inflammasome activation. In Mus musculus (Mouse), this protein is MAP/microtubule affinity-regulating kinase 4.